Here is a 614-residue protein sequence, read N- to C-terminus: Zinc metalloproteinase-disintegrin-like protein F1 (614 aa).

The N-terminal stretch at 1–20 is a signal peptide; sequence MLQVLLVTICLAVFPYQGSS. Residues 21–192 constitute a propeptide that is removed on maturation; that stretch reads IILESGNVND…IKASQFILTP (172 aa). Positions 167–173 match the Cys-switch; controls maturation motif; that stretch reads PKKCGVT. Glu193 carries the post-translational modification Pyrrolidone carboxylic acid (Glu). Positions 202 to 398 constitute a Peptidase M12B domain; sequence KYIKLAIVVD…HTPRCILNEP (197 aa). N-linked (GlcNAc...) asparagine glycosylation occurs at Asn221. Intrachain disulfides connect Cys313-Cys393, Cys353-Cys377, and Cys355-Cys360. His338 is a binding site for Zn(2+). The short motif at 338–349 is the Metal-binding element; that stretch reads HELGHNLGINHD. Glu339 functions as the Proton acceptor in the catalytic mechanism. His342 and His348 together coordinate Zn(2+). The region spanning 406–492 is the Disintegrin domain; the sequence is PAVCGNYVVE…ECPMDHIQKN (87 aa). Ca(2+)-binding residues include Val408, Asn411, Glu415, Glu418, and Asp421. 14 disulfide bridges follow: Cys409–Cys438, Cys420–Cys433, Cys422–Cys428, Cys432–Cys455, Cys446–Cys452, Cys451–Cys477, Cys464–Cys484, Cys471–Cys503, Cys496–Cys508, Cys515–Cys565, Cys530–Cys575, Cys543–Cys553, Cys560–Cys601, and Cys595–Cys607. A D/ECD-tripeptide motif is present at residues 470 to 472; it reads ECD. Positions 472, 475, and 487 each coordinate Ca(2+). Asn534 carries N-linked (GlcNAc...) asparagine glycosylation.

It belongs to the venom metalloproteinase (M12B) family. P-III subfamily. P-IIIa sub-subfamily. In terms of assembly, monomer. Zn(2+) serves as cofactor. In terms of processing, N-glycosylated. Post-translationally, the N-terminus is blocked. Expressed by the venom gland (at protein level). Expressed by the venom gland.

The protein localises to the secreted. With respect to regulation, the alpha-fibrinogenase activity is inhibited by EDTA, but not by pefabloc. Zinc metalloprotease that has fibrinogenolytic activity. Does not have hemorrhagic activity in rats. Cleaves insulin B chain at '38-Ala-|-Leu-39' and '40-Tyr-|-Leu-41' bonds. Hydrolyzes only partially and weakly isolated extracellular matrix (ECM) bovine fibronectin and basal membrane (BM) protein human collagen IV in vitro. Murine laminin is not hydrolyzed, neither isolated nor in a solubilized BM preparation. Nidogen is hydrolyzed at '350-Ser-|-Phe-351' bond in a solubilized BM preparation. Hydrolyzes plasma proteins involved in blood coagulation in vitro. Has alpha-fibrinogenase activity cleaving human fibrinogen alpha chain at '432-Lys-|-Leu-433' bond, but does not cleave beta or gamma chains. Does not cleave fibrin. Hydrolyzes only partially bovine prothrombin at '200-Ser-|-Gly-201' bond, factor X (FX) heavy chain, and very slowly, FX light chain and plasminogen in vitro, without activating any of them. Has no effect in plasma thrombin generation. Does not inhibit platelet aggregation induced by collagen in vitro. May have a delayed pathological action as an anticoagulant in envenomed patients after they received serotherapy as it is not recognized by the venom antiserum. The protein is Zinc metalloproteinase-disintegrin-like protein F1 of Vipera ammodytes ammodytes (Western sand viper).